The chain runs to 182 residues: UPF0397 protein SAG1634 (182 aa).

The next 5 helical transmembrane spans lie at 9–29 (VVATGIGAALFIIIGMLVNIP), 42–62 (AVLALFAVIYGPGVGFFTGFI), 74–94 (SPWWTWVLVSGLLGLMIGFFA), 109–129 (LLLFNVVQVIANLIGWSVVAP), and 148–168 (FLSSLVNSITIGVGGTLLLLA).

The protein belongs to the UPF0397 family.

The protein resides in the cell membrane. The protein is UPF0397 protein SAG1634 of Streptococcus agalactiae serotype V (strain ATCC BAA-611 / 2603 V/R).